A 347-amino-acid polypeptide reads, in one-letter code: Dolichyl-diphosphooligosaccharide--protein glycosyltransferase subunit TUSC3 (347 aa).

Residues 1–41 (MSARAAPSRRRQAGRRLRYLPTGSFPFLLLLLLLCIQLGGG) form the signal peptide. Residues 42 to 196 (QKKKENLLAE…DVHIRVFRPP (155 aa)) lie on the Lumenal side of the membrane. Residues 59 to 187 (WSSRRSIFRM…LAKWIADRTD (129 aa)) enclose the Thioredoxin domain. An N-linked (GlcNAc...) asparagine glycan is attached at asparagine 83. A disulfide bridge links cysteine 99 with cysteine 102. A helical membrane pass occupies residues 197–217 (NYSGTIALALLVSLVGGLLYL). The Cytoplasmic portion of the chain corresponds to 218 to 221 (RRNN). The chain crosses the membrane as a helical span at residues 222-242 (LEFIYNKTGWAMVSLCIVFAM). Over 243–276 (TSGQMWNHIRGPPYAHKNPHNGQVSYIHGSSQAQ) the chain is Lumenal. Residues 277–297 (FVAESHIILVLNAAITMGMVL) form a helical membrane-spanning segment. Residues 298–312 (LNEAATSKGDVGKRR) lie on the Cytoplasmic side of the membrane. Residues 313-333 (IICLVGLGLVVFFFSFLLSIF) traverse the membrane as a helical segment. At 334–347 (RSKYHGYPYSFLIK) the chain is on the lumenal side.

The protein belongs to the OST3/OST6 family. As to quaternary structure, accessory component of the STT3B-containing form of the oligosaccharyltransferase (OST) complex. OST exists in two different complex forms which contain common core subunits RPN1, RPN2, OST48, OST4, DAD1 and TMEM258, either STT3A or STT3B as catalytic subunits, and form-specific accessory subunits. OST can form stable complexes with the Sec61 complex or with both the Sec61 and TRAP complexes. The association of TUSC3 or MAGT1 with the STT3B-containing complex seems to be mutually exclusvice.

Its subcellular location is the endoplasmic reticulum membrane. The protein operates within protein modification; protein glycosylation. Its function is as follows. Acts as accessory component of the N-oligosaccharyl transferase (OST) complex which catalyzes the transfer of a high mannose oligosaccharide from a lipid-linked oligosaccharide donor to an asparagine residue within an Asn-X-Ser/Thr consensus motif in nascent polypeptide chains. Involved in N-glycosylation of STT3B-dependent substrates. Specifically required for the glycosylation of a subset of acceptor sites that are near cysteine residues; in this function seems to act redundantly with MAGT1. In its oxidized form proposed to form transient mixed disulfides with a glycoprotein substrate to facilitate access of STT3B to the unmodified acceptor site. Also has oxidoreductase-independent functions in the STT3B-containing OST complex possibly involving substrate recognition. Could indirectly play a role in Mg(2+) transport. The protein is Dolichyl-diphosphooligosaccharide--protein glycosyltransferase subunit TUSC3 (Tusc3) of Mus musculus (Mouse).